The sequence spans 64 residues: UPF0434 protein Bcen_1934 (64 aa).

It belongs to the UPF0434 family.

This is UPF0434 protein Bcen_1934 from Burkholderia orbicola (strain AU 1054).